The primary structure comprises 420 residues: Histidine--tRNA ligase (420 aa).

Belongs to the class-II aminoacyl-tRNA synthetase family. Homodimer.

It is found in the cytoplasm. The enzyme catalyses tRNA(His) + L-histidine + ATP = L-histidyl-tRNA(His) + AMP + diphosphate + H(+). The chain is Histidine--tRNA ligase from Anaplasma phagocytophilum (strain HZ).